The primary structure comprises 149 residues: NADH-quinone oxidoreductase subunit I 1 (149 aa).

2 consecutive 4Fe-4S ferredoxin-type domains span residues 51–82 (LKSF…VQGT) and 93–122 (THYV…YSTE). [4Fe-4S] cluster is bound by residues C62, C65, C68, C72, C102, C105, C108, and C112.

The protein belongs to the complex I 23 kDa subunit family. In terms of assembly, NDH-1 is composed of 14 different subunits. Subunits NuoA, H, J, K, L, M, N constitute the membrane sector of the complex. Requires [4Fe-4S] cluster as cofactor.

The protein localises to the cell inner membrane. It carries out the reaction a quinone + NADH + 5 H(+)(in) = a quinol + NAD(+) + 4 H(+)(out). Functionally, NDH-1 shuttles electrons from NADH, via FMN and iron-sulfur (Fe-S) centers, to quinones in the respiratory chain. The immediate electron acceptor for the enzyme in this species is believed to be ubiquinone. Couples the redox reaction to proton translocation (for every two electrons transferred, four hydrogen ions are translocated across the cytoplasmic membrane), and thus conserves the redox energy in a proton gradient. In Syntrophobacter fumaroxidans (strain DSM 10017 / MPOB), this protein is NADH-quinone oxidoreductase subunit I 1.